Consider the following 124-residue polypeptide: MTTISLRKSNTRLPPEVNRVLYVRNLPFNITSEEMYDIFGKYGAIRQIRIGCDKATKGTAFVVYEDIYDAKNAVDHLSGFNVANRYLIVLYYQHAKMSKKFDQKKSEDEITKLQEKYGVSTKDK.

The segment at 16–29 (EVNRVLYVRNLPFN) is interaction with pre-mRNA branch site. Residues 19–94 (RVLYVRNLPF…RYLIVLYYQH (76 aa)) enclose the RRM domain.

The protein resides in the nucleus. Its function is as follows. May be necessary for the splicing of pre-mRNA. In Arabidopsis thaliana (Mouse-ear cress), this protein is Splicing factor 3B subunit 6-like protein.